A 516-amino-acid polypeptide reads, in one-letter code: Probable 2-isopropylmalate synthase (516 aa).

The 252-residue stretch at 20–271 (VTVFDTTLRD…KTNIRTEYLV (252 aa)) folds into the Pyruvate carboxyltransferase domain.

Belongs to the alpha-IPM synthase/homocitrate synthase family.

The catalysed reaction is 3-methyl-2-oxobutanoate + acetyl-CoA + H2O = (2S)-2-isopropylmalate + CoA + H(+). It functions in the pathway amino-acid biosynthesis; L-leucine biosynthesis; L-leucine from 3-methyl-2-oxobutanoate: step 1/4. Its function is as follows. Catalyzes the condensation of the acetyl group of acetyl-CoA with 3-methyl-2-oxobutanoate (2-oxoisovalerate) to form 3-carboxy-3-hydroxy-4-methylpentanoate (2-isopropylmalate). The protein is Probable 2-isopropylmalate synthase (leuA) of Methanosarcina mazei (strain ATCC BAA-159 / DSM 3647 / Goe1 / Go1 / JCM 11833 / OCM 88) (Methanosarcina frisia).